The following is a 169-amino-acid chain: MKIVVYHAEECDRKKCTSLKLGRKGKFKIVSSLNQLPRGALVLNPFSEKAVSPEDRDMVLRRGIAALDCSWKKVKKSSVIFQTARNHRSLPFLVAANPTNYGKPCILSTAEAVAATLYIVGLKDIASDIMSYFKWGPHFLDLNRELLEAYSRAENSLEVVEIQKKFIGG.

4 residues coordinate S-adenosyl-L-methionine: Thr17, Leu67, Leu90, and Thr109.

It belongs to the TDD superfamily. TSR3 family.

The protein resides in the cytoplasm. It carries out the reaction an N(1)-methylpseudouridine in rRNA + S-adenosyl-L-methionine = N(1)-methyl-N(3)-[(3S)-3-amino-3-carboxypropyl]pseudouridine in rRNA + S-methyl-5'-thioadenosine + H(+). Aminocarboxypropyltransferase that catalyzes the aminocarboxypropyl transfer on pseudouridine corresponding to position 914 in M.jannaschii 16S rRNA. It constitutes the last step in biosynthesis of the hypermodified N1-methyl-N3-(3-amino-3-carboxypropyl) pseudouridine (m1acp3-Psi). In Methanothermobacter thermautotrophicus (strain ATCC 29096 / DSM 1053 / JCM 10044 / NBRC 100330 / Delta H) (Methanobacterium thermoautotrophicum), this protein is 16S rRNA aminocarboxypropyltransferase.